The following is a 344-amino-acid chain: MLVEKFLKDFTIPEKIEFLKSQGDGSYGKFTIYPFERGFGITIGNTLRRVLLSSIEGYAITAMRVQSNNKDSSSKVVSSEFDLIPGVSEDTLEIIANIKNIHLKLGEGEQRKTISFSVSGKDTNVLKASHFERDGVEVFNKDLVIATLSHDVNLDLEFQINYGRGYVSSEQNSKYLEEVNVIALDSIFSPIEKVSYSVEDTRVGQRSDYDKLVMEIWTTGVISAKDAIKKAASIVREFLFPLVDFEDNVNTSFEKSKSESSNLLDMSIEKLNLSVRSLNCLAKENVRTLGELISKNAEELSKARNFGKKSLEEIIEKLGSYRLYLGMSKEDALSVLSKNVKISE.

Positions 1-246 (MLVEKFLKDF…EFLFPLVDFE (246 aa)) are alpha N-terminal domain (alpha-NTD). Residues 259–344 (ESSNLLDMSI…VLSKNVKISE (86 aa)) are alpha C-terminal domain (alpha-CTD).

It belongs to the RNA polymerase alpha chain family. Homodimer. The RNAP catalytic core consists of 2 alpha, 1 beta, 1 beta' and 1 omega subunit. When a sigma factor is associated with the core the holoenzyme is formed, which can initiate transcription.

The catalysed reaction is RNA(n) + a ribonucleoside 5'-triphosphate = RNA(n+1) + diphosphate. In terms of biological role, DNA-dependent RNA polymerase catalyzes the transcription of DNA into RNA using the four ribonucleoside triphosphates as substrates. The protein is DNA-directed RNA polymerase subunit alpha of Borreliella burgdorferi (strain ATCC 35210 / DSM 4680 / CIP 102532 / B31) (Borrelia burgdorferi).